A 59-amino-acid chain; its full sequence is Large ribosomal subunit protein bL32 (59 aa).

The protein belongs to the bacterial ribosomal protein bL32 family.

This chain is Large ribosomal subunit protein bL32, found in Synechococcus sp. (strain RCC307).